The chain runs to 133 residues: Small ribosomal subunit protein uS9 (133 aa).

Residues 98–113 are compositionally biased toward basic and acidic residues; that stretch reads RKPLKTEGHLSRDPRA. Residues 98–133 are disordered; that stretch reads RKPLKTEGHLSRDPRAKERRKYGLKKARKAPQFSKR. The span at 114–133 shows a compositional bias: basic residues; that stretch reads KERRKYGLKKARKAPQFSKR.

It belongs to the universal ribosomal protein uS9 family.

This chain is Small ribosomal subunit protein uS9, found in Synechococcus sp. (strain CC9902).